Consider the following 331-residue polypeptide: Cytochrome bo(3) ubiquinol oxidase subunit 2 (331 aa).

Residues 1 to 23 (MTKANPFAALKWLSLAPALLLGG) form the signal peptide. Cys-24 carries N-palmitoyl cysteine lipidation. Cys-24 carries S-diacylglycerol cysteine lipidation. Residues 24–41 (CDMTLFNPKGQVGMDERT) are Periplasmic-facing. Residues 42–62 (LIITATLLMLIVVIPVIVMTL) traverse the membrane as a helical segment. Residues 63 to 86 (AFAWKYRASNTQAEYKPDWHHSNR) lie on the Cytoplasmic side of the membrane. A helical membrane pass occupies residues 87-107 (IEAVVWLVPCVIIAILGWITW). Residues 108 to 331 (ESTHKLDPYR…DMHMQPSTQE (224 aa)) lie on the Periplasmic side of the membrane.

It belongs to the cytochrome c oxidase subunit 2 family. As to quaternary structure, heterooctamer of two A chains, two B chains, two C chains and two D chains.

It localises to the cell inner membrane. Cytochrome bo(3) ubiquinol terminal oxidase is the component of the aerobic respiratory chain of E.coli that predominates when cells are grown at high aeration. Has proton pump activity across the membrane in addition to electron transfer, pumping 2 protons/electron. This chain is Cytochrome bo(3) ubiquinol oxidase subunit 2 (cyoA), found in Pseudomonas aeruginosa (strain ATCC 15692 / DSM 22644 / CIP 104116 / JCM 14847 / LMG 12228 / 1C / PRS 101 / PAO1).